Consider the following 365-residue polypeptide: Chorismate synthase (365 aa).

Positions Ile41 to Glu61 are disordered. Arg48 lines the NADP(+) pocket. Residues Arg125 to Ser127, Gly285, Lys300 to Ser304, and Arg327 each bind FMN.

This sequence belongs to the chorismate synthase family. It depends on FMNH2 as a cofactor.

It carries out the reaction 5-O-(1-carboxyvinyl)-3-phosphoshikimate = chorismate + phosphate. It participates in metabolic intermediate biosynthesis; chorismate biosynthesis; chorismate from D-erythrose 4-phosphate and phosphoenolpyruvate: step 7/7. Catalyzes the anti-1,4-elimination of the C-3 phosphate and the C-6 proR hydrogen from 5-enolpyruvylshikimate-3-phosphate (EPSP) to yield chorismate, which is the branch point compound that serves as the starting substrate for the three terminal pathways of aromatic amino acid biosynthesis. This reaction introduces a second double bond into the aromatic ring system. This Methanosarcina barkeri (strain Fusaro / DSM 804) protein is Chorismate synthase.